The sequence spans 512 residues: Maturase K (512 aa).

Belongs to the intron maturase 2 family. MatK subfamily.

It is found in the plastid. The protein resides in the chloroplast. Usually encoded in the trnK tRNA gene intron. Probably assists in splicing its own and other chloroplast group II introns. The protein is Maturase K of Lilium longiflorum (Trumpet lily).